A 122-amino-acid polypeptide reads, in one-letter code: UPF0102 protein XAC0764 (122 aa).

This sequence belongs to the UPF0102 family.

The chain is UPF0102 protein XAC0764 from Xanthomonas axonopodis pv. citri (strain 306).